Consider the following 662-residue polypeptide: UvrABC system protein B (662 aa).

Residues 31–188 (DNIEGGEKAQ…NDLVDIQFER (158 aa)) enclose the Helicase ATP-binding domain. Residue 44 to 51 (GATGTGKT) coordinates ATP. The short motif at 97–120 (YYDYYQPEAYVPSSDTYIEKDSSV) is the Beta-hairpin element. Residues 435-601 (QIDDLLGEIN…TIKKEIRDLI (167 aa)) form the Helicase C-terminal domain. The region spanning 626–661 (KELVKKLEKQMQEAVEVLDFELAAQIRDMMLEVKAL) is the UVR domain.

The protein belongs to the UvrB family. In terms of assembly, forms a heterotetramer with UvrA during the search for lesions. Interacts with UvrC in an incision complex.

The protein localises to the cytoplasm. The UvrABC repair system catalyzes the recognition and processing of DNA lesions. A damage recognition complex composed of 2 UvrA and 2 UvrB subunits scans DNA for abnormalities. Upon binding of the UvrA(2)B(2) complex to a putative damaged site, the DNA wraps around one UvrB monomer. DNA wrap is dependent on ATP binding by UvrB and probably causes local melting of the DNA helix, facilitating insertion of UvrB beta-hairpin between the DNA strands. Then UvrB probes one DNA strand for the presence of a lesion. If a lesion is found the UvrA subunits dissociate and the UvrB-DNA preincision complex is formed. This complex is subsequently bound by UvrC and the second UvrB is released. If no lesion is found, the DNA wraps around the other UvrB subunit that will check the other stand for damage. In Streptococcus pneumoniae serotype 19F (strain G54), this protein is UvrABC system protein B.